Reading from the N-terminus, the 385-residue chain is Lipid-A-disaccharide synthase (385 aa).

It belongs to the LpxB family.

It catalyses the reaction 2-N,3-O-bis[(3R)-3-hydroxytetradecanoyl]-alpha-D-glucosaminyl 1-phosphate + UDP-2-N,3-O-bis[(3R)-3-hydroxytetradecanoyl]-alpha-D-glucosamine = lipid A disaccharide (E. coli) + UDP + H(+). The enzyme catalyses a lipid X + a UDP-2-N,3-O-bis[(3R)-3-hydroxyacyl]-alpha-D-glucosamine = a lipid A disaccharide + UDP + H(+). It participates in glycolipid biosynthesis; lipid IV(A) biosynthesis; lipid IV(A) from (3R)-3-hydroxytetradecanoyl-[acyl-carrier-protein] and UDP-N-acetyl-alpha-D-glucosamine: step 5/6. Its function is as follows. Condensation of UDP-2,3-diacylglucosamine and 2,3-diacylglucosamine-1-phosphate to form lipid A disaccharide, a precursor of lipid A, a phosphorylated glycolipid that anchors the lipopolysaccharide to the outer membrane of the cell. This chain is Lipid-A-disaccharide synthase, found in Wigglesworthia glossinidia brevipalpis.